The chain runs to 187 residues: UPF0301 protein VP2612 (187 aa).

Belongs to the UPF0301 (AlgH) family.

The protein is UPF0301 protein VP2612 of Vibrio parahaemolyticus serotype O3:K6 (strain RIMD 2210633).